Here is a 30-residue protein sequence, read N- to C-terminus: Cyclotide mela-5 (30 aa).

Residues 1–30 constitute a cross-link (cyclopeptide (Gly-Asp)); that stretch reads GSAIACGESCFKFKCYTPGCSCSYPICKKD. Cystine bridges form between Cys-6/Cys-20, Cys-10/Cys-22, and Cys-15/Cys-27.

This is a cyclic peptide. Post-translationally, contains 3 disulfide bonds.

Probably participates in a plant defense mechanism (Potential). Binds to and induces leakage in phospholipd membranes, particularly ones containing 1-palmitoyl-2-oleophosphatidylethanolamine (POPE). This is Cyclotide mela-5 from Melicytus latifolius (Norfolk Island mahoe).